Here is a 149-residue protein sequence, read N- to C-terminus: uncharacterized protein (149 aa).

Ser21 carries the phosphoserine modification. 2 helical membrane passes run 48 to 68 (FMEF…WVLG) and 72 to 92 (VLAA…FQLV). Residues 116-149 (AEEVPPPSYPSLEEENEGNEEIEESEEMNTLLSK) are disordered. Positions 127–142 (LEEENEGNEEIEESEE) are enriched in acidic residues.

It is found in the membrane. This is an uncharacterized protein from Schizosaccharomyces pombe (strain 972 / ATCC 24843) (Fission yeast).